The chain runs to 154 residues: MKKEQLVADLEALCAPIVKEKGYDLYHIEYVKENNEYYLRLYIEKPEERISLRDCEIVSRALSDMLDIEDPIKDAYFLEVSSPGLNRRLHSDEHFNRFIGKEVFVGFKSSLSGRKNVKGILKDVQENEIIVECEGNEIKVPKDKIKTANLEGEI.

This sequence belongs to the RimP family.

It is found in the cytoplasm. Functionally, required for maturation of 30S ribosomal subunits. The polypeptide is Ribosome maturation factor RimP (Clostridium perfringens (strain ATCC 13124 / DSM 756 / JCM 1290 / NCIMB 6125 / NCTC 8237 / Type A)).